Consider the following 198-residue polypeptide: Protein GrpE (198 aa).

Belongs to the GrpE family. In terms of assembly, homodimer.

The protein localises to the cytoplasm. Participates actively in the response to hyperosmotic and heat shock by preventing the aggregation of stress-denatured proteins, in association with DnaK and GrpE. It is the nucleotide exchange factor for DnaK and may function as a thermosensor. Unfolded proteins bind initially to DnaJ; upon interaction with the DnaJ-bound protein, DnaK hydrolyzes its bound ATP, resulting in the formation of a stable complex. GrpE releases ADP from DnaK; ATP binding to DnaK triggers the release of the substrate protein, thus completing the reaction cycle. Several rounds of ATP-dependent interactions between DnaJ, DnaK and GrpE are required for fully efficient folding. This chain is Protein GrpE, found in Lysinibacillus sphaericus (Bacillus sphaericus).